The sequence spans 320 residues: MKKISLIGAGQIGGTLAHLIGTKEVADEVVLFDVASGIAKGKALDIAQSSSVDGFNVKFSGTDNYEDIKDSDVIIITAGVPRKPGMSRDDLLGINLKIIKQVAEGIKKNAPNAFVICITNPLDVMVMAFQKFSGLPANKVVGMAGILDSSRFKLFLSLELNVPVKEIEAMVMGGHGDTMVPLPRFTKVSGKPLLDLVKEGKISPERLEEINQRTRDGGAEIVKYLEKGSAFYAPAASGVQMAEAYLKDEKKLLPCAVHLNGEYGVSNVYAGVPVIIGKDGVEKIEQIDLDEKEKKEFMHSIDAVKALWEAASKIDPDLSK.

NAD(+) is bound by residues 8–13 (GAGQIG) and Asp-33. Residues Arg-82 and Arg-88 each contribute to the substrate site. NAD(+)-binding positions include Asn-95 and 118–120 (ITN). Substrate is bound by residues Asn-120 and Arg-151. His-175 acts as the Proton acceptor in catalysis.

The protein belongs to the LDH/MDH superfamily. MDH type 3 family.

It catalyses the reaction (S)-malate + NAD(+) = oxaloacetate + NADH + H(+). Functionally, catalyzes the reversible oxidation of malate to oxaloacetate. This is Malate dehydrogenase from Pelagibacter ubique (strain HTCC1062).